We begin with the raw amino-acid sequence, 316 residues long: Beta-ketoacyl-[acyl-carrier-protein] synthase III 1 (316 aa).

Catalysis depends on residues cysteine 112 and histidine 243. Residues 244-248 (QANYR) form an ACP-binding region. Asparagine 273 is an active-site residue.

This sequence belongs to the thiolase-like superfamily. FabH family. Homodimer.

The protein resides in the cytoplasm. The enzyme catalyses malonyl-[ACP] + acetyl-CoA + H(+) = 3-oxobutanoyl-[ACP] + CO2 + CoA. It functions in the pathway lipid metabolism; fatty acid biosynthesis. Its function is as follows. Catalyzes the condensation reaction of fatty acid synthesis by the addition to an acyl acceptor of two carbons from malonyl-ACP. Catalyzes the first condensation reaction which initiates fatty acid synthesis and may therefore play a role in governing the total rate of fatty acid production. Possesses both acetoacetyl-ACP synthase and acetyl transacylase activities. Its substrate specificity determines the biosynthesis of branched-chain and/or straight-chain of fatty acids. The sequence is that of Beta-ketoacyl-[acyl-carrier-protein] synthase III 1 from Vibrio parahaemolyticus serotype O3:K6 (strain RIMD 2210633).